Here is a 526-residue protein sequence, read N- to C-terminus: PTS system alpha-glucoside-specific EIICB component (526 aa).

The region spanning 1-417 is the PTS EIIC type-1 domain; that stretch reads MLKHFQRLGG…YNVKTSGRED (417 aa). Helical transmembrane passes span 12-32, 59-79, 88-108, 132-152, 173-193, 200-220, 224-244, 274-294, 305-325, 330-350, 355-375, and 381-401; these read LFAPVLLFPFAGLVVALTIIL, GWTVFRQLPLIFAIGLPIGLA, LAVLATYLTYNYFISAILTFW, IKTLDTSIVGAIVISGITIYI, LVSAIAFVVMIPCAYITCLVW, ISSLQALMVTSGTFGVWLYTF, ILIPTGLHHFIYGPFIFGPAV, GGFALHGNSKIFGCIGIALAM, IVSGLLIPAALTAALVGITEP, FLFIAPFLFVVHAVLAATMAA, FGVVKYGSGIIEIAALNWLPL, and GVMFTQLAIGVVFIGIHYLVF. Residues 447–526 enclose the PTS EIIB type-1 domain; that stretch reads SGKAKAFLEA…ESFENLMEQN (80 aa). Cys469 serves as the catalytic Phosphocysteine intermediate; for EIIB activity.

It is found in the cell membrane. The phosphoenolpyruvate-dependent sugar phosphotransferase system (sugar PTS), a major carbohydrate active -transport system, catalyzes the phosphorylation of incoming sugar substrates concomitantly with their translocation across the cell membrane. This system is involved in alpha-glucoside transport. The protein is PTS system alpha-glucoside-specific EIICB component (malB) of Fusobacterium mortiferum.